We begin with the raw amino-acid sequence, 139 residues long: Large ribosomal subunit protein uL16 (139 aa).

This sequence belongs to the universal ribosomal protein uL16 family. In terms of assembly, part of the 50S ribosomal subunit.

Its function is as follows. Binds 23S rRNA and is also seen to make contacts with the A and possibly P site tRNAs. The protein is Large ribosomal subunit protein uL16 of Rippkaea orientalis (strain PCC 8801 / RF-1) (Cyanothece sp. (strain PCC 8801)).